The sequence spans 64 residues: Large ribosomal subunit protein bL35 (64 aa).

Residues 1–22 (MPKMKSHTGMGKRVRVTGKGKI) are compositionally biased toward basic residues. Residues 1–28 (MPKMKSHTGMGKRVRVTGKGKIVKQQAG) form a disordered region.

This sequence belongs to the bacterial ribosomal protein bL35 family.

This chain is Large ribosomal subunit protein bL35, found in Salinispora tropica (strain ATCC BAA-916 / DSM 44818 / JCM 13857 / NBRC 105044 / CNB-440).